We begin with the raw amino-acid sequence, 66 residues long: Small ribosomal subunit protein eS27 (66 aa).

Residues Cys21, Cys24, Cys40, and Cys43 each contribute to the Zn(2+) site. Residues 21–43 form a C4-type zinc finger; that stretch reads CPVCGNEQVIFSHATFPARCLVC.

It belongs to the eukaryotic ribosomal protein eS27 family. Part of the 30S ribosomal subunit. The cofactor is Zn(2+).

This Hyperthermus butylicus (strain DSM 5456 / JCM 9403 / PLM1-5) protein is Small ribosomal subunit protein eS27.